The sequence spans 1357 residues: DNA-directed RNA polymerase subunit beta (1357 aa).

Belongs to the RNA polymerase beta chain family. The RNAP catalytic core consists of 2 alpha, 1 beta, 1 beta' and 1 omega subunit. When a sigma factor is associated with the core the holoenzyme is formed, which can initiate transcription.

The enzyme catalyses RNA(n) + a ribonucleoside 5'-triphosphate = RNA(n+1) + diphosphate. Its function is as follows. DNA-dependent RNA polymerase catalyzes the transcription of DNA into RNA using the four ribonucleoside triphosphates as substrates. The protein is DNA-directed RNA polymerase subunit beta of Pseudomonas putida (strain ATCC 700007 / DSM 6899 / JCM 31910 / BCRC 17059 / LMG 24140 / F1).